Here is a 426-residue protein sequence, read N- to C-terminus: Kynureninase (426 aa).

Pyridoxal 5'-phosphate contacts are provided by residues Leu-110, Ser-111, 138–141 (FPSD), Asp-223, His-226, and Tyr-248. Lys-249 bears the N6-(pyridoxal phosphate)lysine mark. The pyridoxal 5'-phosphate site is built by Trp-279 and Asn-307.

Belongs to the kynureninase family. In terms of assembly, homodimer. It depends on pyridoxal 5'-phosphate as a cofactor.

It carries out the reaction L-kynurenine + H2O = anthranilate + L-alanine + H(+). The enzyme catalyses 3-hydroxy-L-kynurenine + H2O = 3-hydroxyanthranilate + L-alanine + H(+). It participates in amino-acid degradation; L-kynurenine degradation; L-alanine and anthranilate from L-kynurenine: step 1/1. The protein operates within cofactor biosynthesis; NAD(+) biosynthesis; quinolinate from L-kynurenine: step 2/3. Its function is as follows. Catalyzes the cleavage of L-kynurenine (L-Kyn) and L-3-hydroxykynurenine (L-3OHKyn) into anthranilic acid (AA) and 3-hydroxyanthranilic acid (3-OHAA), respectively. The polypeptide is Kynureninase (Myxococcus xanthus (strain DK1622)).